Consider the following 1682-residue polypeptide: Merozoite surface protein 1 (1682 aa).

The first 19 residues, 1–19, serve as a signal peptide directing secretion; the sequence is MKIIFFLCSFLFFIINTQC. The interval 68–110 is disordered; sequence AVSTQSAKNPPGATVPSGTASTKGAIRSPGAANPSDDSSDSDA. N233, N462, N528, and N599 each carry an N-linked (GlcNAc...) asparagine glycan. Residues 696–729 are disordered; that stretch reads SETTEDGGHSTHTLSQSGETEVTEETEETVGHTT. Residues N785, N881, N901, N947, N1071, and N1178 are each glycosylated (N-linked (GlcNAc...) asparagine). The segment at 870–918 is disordered; sequence ITGTSSTSSPGNTTVNTAQSATHSNSQNQQSNASSTNTQNGVAVSSGPA. The span at 871–909 shows a compositional bias: low complexity; the sequence is TGTSSTSSPGNTTVNTAQSATHSNSQNQQSNASSTNTQN. Disordered stretches follow at residues 1212–1241 and 1433–1453; these read TPPQ…TQIP and KEFP…DEQK. A compositionally biased stretch (polar residues) spans 1227 to 1241; the sequence is VSGSSGSTKEETQIP. Residues 1437-1446 are compositionally biased toward pro residues; that stretch reads SSPPTTPPSP. The N-linked (GlcNAc...) asparagine glycan is linked to N1569. EGF-like domains are found at residues 1573-1613 and 1614-1661; these read HQCV…VENP and NPTC…IFCS. 6 cysteine pairs are disulfide-bonded: C1575/C1586, C1580/C1596, C1598/C1609, C1617/C1630, C1624/C1644, and C1646/C1660. S1661 carries GPI-anchor amidated serine lipidation. Positions 1662–1682 are cleaved as a propeptide — removed in mature form; it reads SSNFLGISFLLILMLILYSFI.

As to quaternary structure, forms a complex composed of subunits p83, p30, p38, and p42 which remain non-covalently associated; the complex is formed at the merozoite surface prior to egress from host erythrocytes. Forms a complex composed of processed MSP1 subunits, MSP6 subunit p36 and MSP7; the complex is formed at the merozoite surface prior to egress from host erythrocytes. Within the complex, interacts (via subunit p38) with MSP6 subunit p36 and (via subunits p83, p30 and p38) with MSP7 (via subunit p22). Forms a complex composed of MSP1, MSP6, DBLMSP1 and DBLMSP2. Within the complex, interacts (via subunit p38) with DBLMSP1 and DBLMSP2. Forms a complex composed of MSP1, and rhoptry proteins RhopH3, RAP1 and CLAG9/RhopH3. Within the complex, interacts (via subunits p42 and p19) with RhopH3 (via C-terminus). Forms a complex composed of MSP1, MSP6, MSP7, MSP9 and MSP3; within the complex, MSP6 and MSP9 mediate the binding to the host erythrocyte. Interacts (via subunits p19 and p42) with MSP9; the interaction is direct; MSP1 subunits p19 or p42, and MSP9 form a co-ligand complex that interacts with host SLC4A1/Band 3 protein. May interact with PFD6. Interacts with host spectrin. In terms of assembly, interacts with host glycophorin GYPA in a sialic acid-independent manner. Interacts with host proinflammatory cytokine S100P; the interaction blocks S100P inflammatory and chemotactic activities. As to quaternary structure, interacts with host SLC4A1/Band 3 (via 5ABC region) on the host erythrocyte surface in a sialic acid-independent manner. The p190 precursor is cleaved by SUB1 prior to merozoite egress into 4 subunits p83, p30, p38, and p42 which remain non-covalently associated. SUB1-mediated proteolytic cleavage occurs in an orderly manner; the first cleavage occurs at the p30/p38 site, followed by cleavage at the p83/p30 site, the last cleavage occurs at the p38/p42 site. The order of cleavage is essential for parasite viability. SUB1-mediated processing is essential for merozoite egress. In a second processing step during erythrocyte invasion, p42 is cleaved by SUB2 into p33 and p19; the latter remains attached to the merozoite surface via its GPI-anchor and is endocytosed during the subsequent ring stage.

The protein resides in the cell membrane. It is found in the secreted. Its subcellular location is the vacuole membrane. Functionally, during the asexual blood stage, involved in merozoite egress from host erythrocytes possibly via its interaction with the host cytoskeleton protein spectrin resulting in the destabilization of the host cytoskeleton and thus leading to erythrocyte cell membrane rupture. Involved in the binding to host erythrocytes and is required for host erythrocyte invasion. Its function is as follows. By binding to host proinflammatory cytokine S100P may interfere with host immune responses. Involved in merozoite invasion of host erythrocytes. May play a role in the biogenesis and/or function of the food vacuole during the intraerythrocytic development. In Plasmodium falciparum (isolate ro-33 / Ghana), this protein is Merozoite surface protein 1.